The primary structure comprises 207 residues: High mobility group protein B2 (207 aa).

2 consecutive DNA-binding regions (HMG box) follow at residues 9-79 (PRGK…KNYV) and 95-163 (PKRP…AAYR). A cysteine sulfonic acid (-SO3H); alternate mark is found at cysteine 23 and cysteine 45. Residues cysteine 23 and cysteine 45 are joined by a disulfide bond. A compositionally biased stretch (basic and acidic residues) spans 52–76 (MSSKEKGKFEEMAKGDKARYDREMK). Residues 52–102 (MSSKEKGKFEEMAKGDKARYDREMKNYVPPKGEKKGKKKDPNAPKRPPSAF) are disordered. Position 106 is a cysteine sulfonic acid (-SO3H) (cysteine 106). A compositionally biased stretch (basic and acidic residues) spans 162 to 172 (YRAKSKSDAGK). The disordered stretch occupies residues 162 to 207 (YRAKSKSDAGKKGPGRPAGSKKKAEPEEEEEEEEDEEEEEEEEDEE). The segment covering 187 to 207 (PEEEEEEEEDEEEEEEEEDEE) has biased composition (acidic residues).

This sequence belongs to the HMGB family. In terms of processing, reduction/oxidation of cysteine residues Cys-23, Cys-45 and Cys-106 and a possible intramolecular disulfide bond involving Cys-23 and Cys-45 give rise to different redox forms with specific functional activities in various cellular compartments: 1- fully reduced HMGB2 (HMGB2C23hC45hC106h), 2- disulfide HMGB2 (HMGB2C23-C45C106h) and 3- sulfonyl HMGB2 (HMGB2C23soC45soC106so).

It localises to the nucleus. Its subcellular location is the chromosome. The protein localises to the cytoplasm. It is found in the secreted. Its function is as follows. Multifunctional protein with various roles in different cellular compartments. May act in a redox sensitive manner. Associates with chromatin and binds DNA with a preference to non-canonical DNA structures such as single-stranded DNA. Can bent DNA and enhance DNA flexibility by looping thus providing a mechanism to promote activities on various gene promoters. Proposed to be involved in the innate immune response to nucleic acids by acting as a cytoplasmic promiscuous immunogenic DNA/RNA sensor. Involved in inflammatory response to antigenic stimulus coupled with pro-inflammatory activity. In Gallus gallus (Chicken), this protein is High mobility group protein B2 (HMGB2).